A 125-amino-acid polypeptide reads, in one-letter code: Large ribosomal subunit protein bL12 (125 aa).

It belongs to the bacterial ribosomal protein bL12 family. Homodimer. Part of the ribosomal stalk of the 50S ribosomal subunit. Forms a multimeric L10(L12)X complex, where L10 forms an elongated spine to which 2 to 4 L12 dimers bind in a sequential fashion. Binds GTP-bound translation factors.

Functionally, forms part of the ribosomal stalk which helps the ribosome interact with GTP-bound translation factors. Is thus essential for accurate translation. The chain is Large ribosomal subunit protein bL12 from Ruthia magnifica subsp. Calyptogena magnifica.